Here is a 150-residue protein sequence, read N- to C-terminus: MAETKIVVGPQPFSVGEEYPWLAERDEDGAVVTFTGKVRNHNLGDSVNALTLEHYPGMTEKALAEIVDEARNRWPLGRVTVIHRIGELWPGDEIVFVGVTSAHRSSAFEAGQFIMDYLKTRAPFWKREATPEGDRWVEARESDQQAAKRW.

Residues 37–39 (KVR), 103–104 (HR), Lys-119, and 126–128 (KRE) contribute to the substrate site. Lys-119 participates in a covalent cross-link: Glycyl lysine isopeptide (Lys-Gly) (interchain with G-Cter in MoaD).

The protein belongs to the MoaE family. Heterotetramer of 2 MoaD subunits and 2 MoaE subunits. Also stable as homodimer. The enzyme changes between these two forms during catalysis.

The catalysed reaction is 2 [molybdopterin-synthase sulfur-carrier protein]-C-terminal-Gly-aminoethanethioate + cyclic pyranopterin phosphate + H2O = molybdopterin + 2 [molybdopterin-synthase sulfur-carrier protein]-C-terminal Gly-Gly + 2 H(+). The protein operates within cofactor biosynthesis; molybdopterin biosynthesis. Converts molybdopterin precursor Z to molybdopterin. This requires the incorporation of two sulfur atoms into precursor Z to generate a dithiolene group. The sulfur is provided by MoaD. This is Molybdopterin synthase catalytic subunit (moaE) from Escherichia coli (strain K12).